Consider the following 475-residue polypeptide: Glycogen synthase (475 aa).

Residue lysine 15 participates in ADP-alpha-D-glucose binding.

The protein belongs to the glycosyltransferase 1 family. Bacterial/plant glycogen synthase subfamily.

It catalyses the reaction [(1-&gt;4)-alpha-D-glucosyl](n) + ADP-alpha-D-glucose = [(1-&gt;4)-alpha-D-glucosyl](n+1) + ADP + H(+). Its pathway is glycan biosynthesis; glycogen biosynthesis. Synthesizes alpha-1,4-glucan chains using ADP-glucose. This is Glycogen synthase from Chlamydia felis (strain Fe/C-56) (Chlamydophila felis).